A 745-amino-acid polypeptide reads, in one-letter code: Putative cryptochrome DASH, mitochondrial (745 aa).

The transit peptide at 1 to 22 directs the protein to the mitochondrion; the sequence is MAPSKVVIYAMRRELRLSDNPI. The Photolyase/cryptochrome alpha/beta domain occupies 23–166; the sequence is FHHLSNPESK…DFKLWDDEKY (144 aa). Disordered regions lie at residues 563-688 and 702-745; these read KFNL…GGGG and GGYR…QTDA. Residues 571–584 are compositionally biased toward basic residues; the sequence is SKVKKRPFFRKRGT. The span at 591–603 shows a compositional bias: low complexity; sequence GSAESPGSSDSHS. The segment covering 604–616 has biased composition (gly residues); it reads GSGGSPDGSGGGN. The span at 632–648 shows a compositional bias: low complexity; sequence QQTHQGSGRSQSSSNHG. 2 stretches are compositionally biased toward gly residues: residues 672 to 688 and 702 to 718; these read RGGGGGRGGRGGRGGGG and GGYRGGGRGRGGGGGFR. Polar residues predominate over residues 735 to 745; it reads QQVASQFQTDA.

This sequence belongs to the DNA photolyase class-1 family. FAD serves as cofactor. The cofactor is (6R)-5,10-methylene-5,6,7,8-tetrahydrofolate.

It is found in the mitochondrion. In terms of biological role, may have a photoreceptor function. This is Putative cryptochrome DASH, mitochondrial (cry) from Neurospora crassa (strain ATCC 24698 / 74-OR23-1A / CBS 708.71 / DSM 1257 / FGSC 987).